We begin with the raw amino-acid sequence, 512 residues long: Lysine--tRNA ligase (512 aa).

Mg(2+) is bound by residues Glu422 and Glu429.

It belongs to the class-II aminoacyl-tRNA synthetase family. As to quaternary structure, homodimer. The cofactor is Mg(2+).

It is found in the cytoplasm. It catalyses the reaction tRNA(Lys) + L-lysine + ATP = L-lysyl-tRNA(Lys) + AMP + diphosphate. The protein is Lysine--tRNA ligase of Paraburkholderia phymatum (strain DSM 17167 / CIP 108236 / LMG 21445 / STM815) (Burkholderia phymatum).